We begin with the raw amino-acid sequence, 300 residues long: UDP-N-acetylenolpyruvoylglucosamine reductase (300 aa).

One can recognise an FAD-binding PCMH-type domain in the interval 27–216; the sequence is RVGGPADVIF…TERREKTQPI (190 aa). Arg-172 is a catalytic residue. The active-site Proton donor is Ser-223. Glu-293 is a catalytic residue.

This sequence belongs to the MurB family. The cofactor is FAD.

The protein resides in the cytoplasm. The catalysed reaction is UDP-N-acetyl-alpha-D-muramate + NADP(+) = UDP-N-acetyl-3-O-(1-carboxyvinyl)-alpha-D-glucosamine + NADPH + H(+). It functions in the pathway cell wall biogenesis; peptidoglycan biosynthesis. Cell wall formation. The chain is UDP-N-acetylenolpyruvoylglucosamine reductase from Phenylobacterium zucineum (strain HLK1).